A 311-amino-acid polypeptide reads, in one-letter code: Dihydroorotate dehydrogenase A (fumarate) (311 aa).

FMN contacts are provided by residues Ser-19 and 43–44 (KS). Residues Lys-43, 67–71 (NSMGL), and Asn-127 each bind substrate. Asn-127 lines the FMN pocket. The Nucleophile role is filled by Cys-130. Residues Lys-164 and Val-192 each contribute to the FMN site. 193–194 (NS) contributes to the substrate binding site. FMN is bound by residues Gly-221, 249–250 (GG), and 271–272 (GT).

It belongs to the dihydroorotate dehydrogenase family. Type 1 subfamily. Homodimer. It depends on FMN as a cofactor.

Its subcellular location is the cytoplasm. The catalysed reaction is (S)-dihydroorotate + fumarate = orotate + succinate. It participates in pyrimidine metabolism; UMP biosynthesis via de novo pathway. Functionally, catalyzes the conversion of dihydroorotate to orotate with fumarate as the electron acceptor. This is Dihydroorotate dehydrogenase A (fumarate) (pyrDA) from Lactococcus lactis subsp. lactis (strain IL1403) (Streptococcus lactis).